A 564-amino-acid polypeptide reads, in one-letter code: Potassium-transporting ATPase potassium-binding subunit (564 aa).

10 helical membrane-spanning segments follow: residues 4 to 24, 67 to 87, 135 to 155, 179 to 199, 258 to 278, 286 to 306, 376 to 396, 420 to 440, 487 to 507, and 528 to 548; these read HEIL…PFLG, TLAL…ILML, VGLT…LVAL, LYVL…QGVP, FEVA…GHYV, AILG…LWAE, IFGG…IAVF, LLVF…AIAA, LMIG…ILAI, and GPLF…LTFL.

This sequence belongs to the KdpA family. As to quaternary structure, the system is composed of three essential subunits: KdpA, KdpB and KdpC.

It is found in the cell inner membrane. In terms of biological role, part of the high-affinity ATP-driven potassium transport (or Kdp) system, which catalyzes the hydrolysis of ATP coupled with the electrogenic transport of potassium into the cytoplasm. This subunit binds the periplasmic potassium ions and delivers the ions to the membrane domain of KdpB through an intramembrane tunnel. The sequence is that of Potassium-transporting ATPase potassium-binding subunit from Pseudomonas aeruginosa (strain ATCC 15692 / DSM 22644 / CIP 104116 / JCM 14847 / LMG 12228 / 1C / PRS 101 / PAO1).